The following is a 482-amino-acid chain: Anthranilate synthase component 1 (482 aa).

Residues serine 47 and 267 to 269 (PYM) each bind L-tryptophan. Residue 302 to 303 (GT) participates in chorismate binding. Glutamate 329 contributes to the Mg(2+) binding site. Residues tyrosine 417, arginine 437, 451-453 (GGG), and glycine 453 each bind chorismate. A Mg(2+)-binding site is contributed by glutamate 466.

It belongs to the anthranilate synthase component I family. In terms of assembly, heterotetramer consisting of two non-identical subunits: a beta subunit (TrpG) and a large alpha subunit (TrpE). Mg(2+) is required as a cofactor.

The enzyme catalyses chorismate + L-glutamine = anthranilate + pyruvate + L-glutamate + H(+). It functions in the pathway amino-acid biosynthesis; L-tryptophan biosynthesis; L-tryptophan from chorismate: step 1/5. Its activity is regulated as follows. Feedback inhibited by tryptophan. Part of a heterotetrameric complex that catalyzes the two-step biosynthesis of anthranilate, an intermediate in the biosynthesis of L-tryptophan. In the first step, the glutamine-binding beta subunit (TrpG) of anthranilate synthase (AS) provides the glutamine amidotransferase activity which generates ammonia as a substrate that, along with chorismate, is used in the second step, catalyzed by the large alpha subunit of AS (TrpE) to produce anthranilate. In the absence of TrpG, TrpE can synthesize anthranilate directly from chorismate and high concentrations of ammonia. The protein is Anthranilate synthase component 1 (trpE) of Spirochaeta aurantia.